The following is a 362-amino-acid chain: UDP-galactose transporter homolog 1 (362 aa).

Helical transmembrane passes span 7–27, 45–65, 111–131, 141–161, and 175–195; these read IFPV…WALV, CPNV…YFYM, LTYM…HLII, SVVA…GSKG, and FFQK…DGLT. Residue Asn196 is glycosylated (N-linked (GlcNAc...) asparagine). A run of 4 helical transmembrane segments spans residues 234 to 254, 271 to 291, 296 to 316, and 317 to 337; these read HMMF…LLVI, IIVS…CFIF, LYGS…SMLL, and SIIV…VIVF.

This sequence belongs to the nucleotide-sugar transporter family. SLC35B subfamily.

Its subcellular location is the endoplasmic reticulum membrane. Its function is as follows. May be involved in specific transport of UDP-Gal from the cytosol to the Golgi lumen. Involved in the maintenance of optimal conditions for the folding of secretory pathway proteins in the endoplasmic reticulum. This chain is UDP-galactose transporter homolog 1 (HUT1), found in Candida glabrata (strain ATCC 2001 / BCRC 20586 / JCM 3761 / NBRC 0622 / NRRL Y-65 / CBS 138) (Yeast).